The following is a 202-amino-acid chain: ATP-dependent Clp protease proteolytic subunit (202 aa).

Residue S98 is the Nucleophile of the active site. H123 is a catalytic residue.

It belongs to the peptidase S14 family. Fourteen ClpP subunits assemble into 2 heptameric rings which stack back to back to give a disk-like structure with a central cavity, resembling the structure of eukaryotic proteasomes.

Its subcellular location is the cytoplasm. The catalysed reaction is Hydrolysis of proteins to small peptides in the presence of ATP and magnesium. alpha-casein is the usual test substrate. In the absence of ATP, only oligopeptides shorter than five residues are hydrolyzed (such as succinyl-Leu-Tyr-|-NHMec, and Leu-Tyr-Leu-|-Tyr-Trp, in which cleavage of the -Tyr-|-Leu- and -Tyr-|-Trp bonds also occurs).. In terms of biological role, cleaves peptides in various proteins in a process that requires ATP hydrolysis. Has a chymotrypsin-like activity. Plays a major role in the degradation of misfolded proteins. The sequence is that of ATP-dependent Clp protease proteolytic subunit from Magnetococcus marinus (strain ATCC BAA-1437 / JCM 17883 / MC-1).